The following is a 170-amino-acid chain: Adenine phosphoribosyltransferase (170 aa).

The protein belongs to the purine/pyrimidine phosphoribosyltransferase family. In terms of assembly, homodimer.

The protein resides in the cytoplasm. It catalyses the reaction AMP + diphosphate = 5-phospho-alpha-D-ribose 1-diphosphate + adenine. The protein operates within purine metabolism; AMP biosynthesis via salvage pathway; AMP from adenine: step 1/1. Catalyzes a salvage reaction resulting in the formation of AMP, that is energically less costly than de novo synthesis. The protein is Adenine phosphoribosyltransferase of Streptococcus suis (strain 98HAH33).